A 264-amino-acid chain; its full sequence is MSFDINWNKINEDSTINQRARAFLNEHLESLQLPSYVSNIKMTDFKLGTIPPRITLKQIDNPLDDFYEALRLEGASIGGRDTDVQFLMEVDYKGDMLIELSAELVLNYPSPNFMQLPVKLTISDIGIHSLCLVAYLQRQLFISFLCDVSDPALDNVESPLDSNGPAFLGSKAVERISLIRSIKIQTEIGPQDLSEGTILRSVGKLEQFLSDVFKNLLRKEAAWPSWINLDFNEDVSADVESSSSAEESLPHRDDAQDFSADARA.

Positions 1-232 (MSFDINWNKI…WPSWINLDFN (232 aa)) constitute an SMP-LTD domain. The interval 240 to 264 (ESSSSAEESLPHRDDAQDFSADARA) is disordered. Over residues 248–264 (SLPHRDDAQDFSADARA) the composition is skewed to basic and acidic residues.

The protein belongs to the MDM12 family. In terms of assembly, component of the ER-mitochondria encounter structure (ERMES) or MDM complex, composed of MMM1, MDM10, MDM12 and MDM34. An MMM1 homodimer associates with one molecule of MDM12 on each side in a pairwise head-to-tail manner, and the SMP-LTD domains of MMM1 and MDM12 generate a continuous hydrophobic tunnel for phospholipid trafficking.

The protein resides in the mitochondrion outer membrane. The protein localises to the endoplasmic reticulum membrane. Its function is as follows. Component of the ERMES/MDM complex, which serves as a molecular tether to connect the endoplasmic reticulum (ER) and mitochondria. Components of this complex are involved in the control of mitochondrial shape and protein biogenesis, and function in nonvesicular lipid trafficking between the ER and mitochondria. MDM12 is required for the interaction of the ER-resident membrane protein MMM1 and the outer mitochondrial membrane-resident beta-barrel protein MDM10. The MDM12-MMM1 subcomplex functions in the major beta-barrel assembly pathway that is responsible for biogenesis of all mitochondrial outer membrane beta-barrel proteins, and acts in a late step after the SAM complex. The MDM10-MDM12-MMM1 subcomplex further acts in the TOM40-specific pathway after the action of the MDM12-MMM1 complex. Essential for establishing and maintaining the structure of mitochondria and maintenance of mtDNA nucleoids. This is Mitochondrial distribution and morphology protein 12 from Eremothecium gossypii (strain ATCC 10895 / CBS 109.51 / FGSC 9923 / NRRL Y-1056) (Yeast).